The sequence spans 214 residues: ATP phosphoribosyltransferase (214 aa).

Belongs to the ATP phosphoribosyltransferase family. Short subfamily. In terms of assembly, heteromultimer composed of HisG and HisZ subunits.

The protein resides in the cytoplasm. The enzyme catalyses 1-(5-phospho-beta-D-ribosyl)-ATP + diphosphate = 5-phospho-alpha-D-ribose 1-diphosphate + ATP. It participates in amino-acid biosynthesis; L-histidine biosynthesis; L-histidine from 5-phospho-alpha-D-ribose 1-diphosphate: step 1/9. Functionally, catalyzes the condensation of ATP and 5-phosphoribose 1-diphosphate to form N'-(5'-phosphoribosyl)-ATP (PR-ATP). Has a crucial role in the pathway because the rate of histidine biosynthesis seems to be controlled primarily by regulation of HisG enzymatic activity. The polypeptide is ATP phosphoribosyltransferase (Alcanivorax borkumensis (strain ATCC 700651 / DSM 11573 / NCIMB 13689 / SK2)).